Consider the following 262-residue polypeptide: Phosphatidylglycerol--prolipoprotein diacylglyceryl transferase (262 aa).

Transmembrane regions (helical) follow at residues 17-37 (LKVH…WILA), 57-77 (LVFY…ALFY), and 92-112 (IWEG…AMYA). Arginine 140 is a binding site for a 1,2-diacyl-sn-glycero-3-phospho-(1'-sn-glycerol). Transmembrane regions (helical) follow at residues 200-220 (MAVS…VEFV) and 234-254 (WLTM…VLLA).

The protein belongs to the Lgt family.

Its subcellular location is the cell inner membrane. The enzyme catalyses L-cysteinyl-[prolipoprotein] + a 1,2-diacyl-sn-glycero-3-phospho-(1'-sn-glycerol) = an S-1,2-diacyl-sn-glyceryl-L-cysteinyl-[prolipoprotein] + sn-glycerol 1-phosphate + H(+). It functions in the pathway protein modification; lipoprotein biosynthesis (diacylglyceryl transfer). Functionally, catalyzes the transfer of the diacylglyceryl group from phosphatidylglycerol to the sulfhydryl group of the N-terminal cysteine of a prolipoprotein, the first step in the formation of mature lipoproteins. The sequence is that of Phosphatidylglycerol--prolipoprotein diacylglyceryl transferase from Methylococcus capsulatus (strain ATCC 33009 / NCIMB 11132 / Bath).